The chain runs to 1421 residues: Envelopment polyprotein (1421 aa).

A signal peptide spans 1–20; the sequence is MEGSYWWLSLLALLAWGANG. At 21-479 the chain is on the lumenal side; the sequence is ESTSPAETSP…CRMSHRPRTC (459 aa). The segment covering 22-31 has biased composition (low complexity); it reads STSPAETSPA. The disordered stretch occupies residues 22 to 42; that stretch reads STSPAETSPAPTTPNPPVVNP. N-linked (GlcNAc...) asparagine; by host glycans are attached at residues Asn97 and Asn346. A helical transmembrane segment spans residues 480–500; sequence LALFIWLGAGYGITCIAGYMV. Residues 501 to 610 lie on the Cytoplasmic side of the membrane; that stretch reads YYAILALSML…KLGTLLKRLS (110 aa). A helical membrane pass occupies residues 611 to 631; sequence WVTVFLCLFLTAIAPVQGQVT. Residues 632 to 643 lie on the Lumenal side of the membrane; that stretch reads TSPVLPSNQSTE. Asn639 carries N-linked (GlcNAc...) asparagine; by host glycosylation. A helical transmembrane segment spans residues 644-664; that stretch reads CTLLPPPVFLIFSAVLMSKTL. Residues 665-708 are Cytoplasmic-facing; the sequence is KRMGPVNKVGAAGHSARRTNSPKNLYKSKQIANTKSGPREPRRR. Residues 709–729 traverse the membrane as a helical segment; it reads VVVKALLILTASSALQSIHLA. Positions 722–776 are excised as a propeptide; the sequence is ALQSIHLAQAFDSGSLPEGAWEEEMQLVQGCNQECSLEEDECSCPDGQSMTRKLL. The Lumenal portion of the chain corresponds to 730-1330; the sequence is QAFDSGSLPE…GSFFRNYLGS (601 aa). Intrachain disulfides connect Cys901–Cys1096 and Cys929–Cys934. Asn1081 and Asn1299 each carry an N-linked (GlcNAc...) asparagine; by host glycan. Residues 1331 to 1351 form a helical membrane-spanning segment; sequence ITLGIVLTLLPVAVVLLFFCY. Residues 1352-1421 lie on the Cytoplasmic side of the membrane; sequence GDKLFKLCSC…GKGKNYKELV (70 aa).

Belongs to the nairovirus envelope glycoprotein family. Heterodimer with glycoprotein C; in prefusion state. As to quaternary structure, heterodimer with glycoprotein N; in prefusion state. Homotrimeric; in postfusion state. In terms of processing, specific enzymatic cleavage by host MBTPS1/S1P/SKI-1 endopeptidase yield glycoprotein N. Specific enzymatic cleavages by host furin-like protease and MBTPS1/S1P endopeptidase yield GP38. Glycosylated.

The protein resides in the host endoplasmic reticulum membrane. Its subcellular location is the virion membrane. It localises to the host Golgi apparatus membrane. In terms of biological role, glycoprotein N and glycoprotein C interact with each other and are present at the surface of the virion. Glycoprotein N probably locks the Gn-Gc complex in a prefusion state. Glycoprotein N and glycoprotein C are able to attach the virion to host cell receptors. This attachment induces virion internalization predominantly through clathrin-dependent endocytosis. Glycoprotein C and glycoprotein N interact with each other and are present at the surface of the virion. The spikes at the surface of the virion are formed by an N-terminal extension of glycoprotein C. Glycoprotein N and glycoprotein C are able to attach the virion to host cell receptors. This attachment induces virion internalization predominantly through clathrin-dependent endocytosis. Class II fusion protein that promotes fusion of viral membrane with host endosomal membrane after endocytosis of the virion. Exposure to potassium is necessary for the conformational change leading to fusion. The chain is Envelopment polyprotein (GP) from Ixodes.